Consider the following 152-residue polypeptide: Nucleoside diphosphate kinase B (152 aa).

Positions 1 to 66 (MANLERTFIA…DRPFFPGLVK (66 aa)) are interaction with AKAP13. K12, F60, R88, T94, R105, and N115 together coordinate ATP. Residue H118 is the Pros-phosphohistidine intermediate of the active site.

This sequence belongs to the NDK family. In terms of assembly, hexamer of two different chains: An and B (A6, A5B, A4B2, A3B3, A2B4, AB5, B6). Interacts with CAPN8. Interacts with AKAP13. Interacts with ITGB1BP1 (via C-terminal domain region). Interacts with BCL2L10. The cofactor is Mg(2+). The N-terminus is blocked.

The protein resides in the cytoplasm. It is found in the cell projection. It localises to the lamellipodium. The protein localises to the ruffle. Its subcellular location is the nucleus. The enzyme catalyses a 2'-deoxyribonucleoside 5'-diphosphate + ATP = a 2'-deoxyribonucleoside 5'-triphosphate + ADP. It carries out the reaction a ribonucleoside 5'-diphosphate + ATP = a ribonucleoside 5'-triphosphate + ADP. The catalysed reaction is ATP + protein L-histidine = ADP + protein N-phospho-L-histidine.. Its function is as follows. Major role in the synthesis of nucleoside triphosphates other than ATP. The ATP gamma phosphate is transferred to the NDP beta phosphate via a ping-pong mechanism, using a phosphorylated active-site intermediate. Negatively regulates Rho activity by interacting with AKAP13/LBC. Acts as a transcriptional activator of the MYC gene; binds DNA non-specifically. Binds to both single-stranded guanine- and cytosine-rich strands within the nuclease hypersensitive element (NHE) III(1) region of the MYC gene promoter. Does not bind to duplex NHE III(1). Has G-quadruplex (G4) DNA-binding activity, which is independent of its nucleotide-binding and kinase activity. Binds both folded and unfolded G4 with similar low nanomolar affinities. Stabilizes folded G4s regardless of whether they are prefolded or not. Exhibits histidine protein kinase activity. The chain is Nucleoside diphosphate kinase B (Nme2) from Rattus norvegicus (Rat).